The sequence spans 301 residues: Indole-3-glycerol phosphate synthase (301 aa).

This sequence belongs to the TrpC family.

The enzyme catalyses 1-(2-carboxyphenylamino)-1-deoxy-D-ribulose 5-phosphate + H(+) = (1S,2R)-1-C-(indol-3-yl)glycerol 3-phosphate + CO2 + H2O. Its pathway is amino-acid biosynthesis; L-tryptophan biosynthesis; L-tryptophan from chorismate: step 4/5. This chain is Indole-3-glycerol phosphate synthase, found in Prochlorococcus marinus (strain MIT 9313).